Here is a 616-residue protein sequence, read N- to C-terminus: Electron transfer flavoprotein-ubiquinone oxidoreductase, mitochondrial (616 aa).

A mitochondrion-targeting transit peptide spans 1 to 32 (MLVRLTKLSCPAYHWFHALKIKKCLPLCAPRC). 70 to 84 (VVIVGAGPAGLSAAI) provides a ligand contact to FAD. At K95 the chain carries N6-acetyllysine. An intramembrane segment occupies 108–129 (IGAHTLSGACLDPAAFKELFPD). 2 positions are modified to N6-acetyllysine: K131 and K222. G304 and G305 together coordinate a ubiquinone. Residues K356 and K415 each carry the N6-acetyllysine modification. The stretch at 427–446 (TGLHVTEYEDNLKQSWVWKE) is an intramembrane region. Residue S550 is modified to Phosphoserine. Residues C560, C585, C588, and C591 each coordinate [4Fe-4S] cluster. Residues 576 to 605 (FRLQINAQNCVHCKTCDIKDPSQNINWVVP) form the 4Fe-4S ferredoxin-type domain.

The protein belongs to the ETF-QO/FixC family. In terms of assembly, monomer. Requires [4Fe-4S] cluster as cofactor. FAD is required as a cofactor. Post-translationally, acetylation of Lys-95 and Lys-222 is observed in liver mitochondria from fasted mice but not from fed mice.

Its subcellular location is the mitochondrion inner membrane. The catalysed reaction is a ubiquinone + reduced [electron-transfer flavoprotein] = a ubiquinol + oxidized [electron-transfer flavoprotein] + H(+). Accepts electrons from ETF and reduces ubiquinone. This Mus musculus (Mouse) protein is Electron transfer flavoprotein-ubiquinone oxidoreductase, mitochondrial (Etfdh).